Here is a 311-residue protein sequence, read N- to C-terminus: Ribosomal protein L11 methyltransferase (311 aa).

Residues threonine 162, glycine 183, aspartate 205, and asparagine 248 each coordinate S-adenosyl-L-methionine.

It belongs to the methyltransferase superfamily. PrmA family.

The protein localises to the cytoplasm. It catalyses the reaction L-lysyl-[protein] + 3 S-adenosyl-L-methionine = N(6),N(6),N(6)-trimethyl-L-lysyl-[protein] + 3 S-adenosyl-L-homocysteine + 3 H(+). In terms of biological role, methylates ribosomal protein L11. The polypeptide is Ribosomal protein L11 methyltransferase (Bacillus velezensis (strain DSM 23117 / BGSC 10A6 / LMG 26770 / FZB42) (Bacillus amyloliquefaciens subsp. plantarum)).